Here is a 222-residue protein sequence, read N- to C-terminus: GTP-binding nuclear protein Ran-4 (222 aa).

Residues 10–174 (DLPTFKLLIV…LYLARRIAGD (165 aa)) enclose the Small GTPase Ran-type domain. 21–28 (DGGTGKTT) contributes to the GTP binding site. Residues 40-48 (HNTEPTLGV) form a switch-I region. GTP is bound by residues Gly71, 125–128 (NKVD), and 153–155 (SAK). Positions 71–87 (GQEKYSGLKDAYYIHGQ) are switch-II.

Belongs to the small GTPase superfamily. Ran family. As to quaternary structure, found in a nuclear export complex with RanGTP, exportin and pre-miRNA.

The protein localises to the nucleus. Its function is as follows. GTP-binding protein involved in nucleocytoplasmic transport. Required for the import of protein into the nucleus and also for RNA export. Involved in chromatin condensation and control of cell cycle. This Arabidopsis thaliana (Mouse-ear cress) protein is GTP-binding nuclear protein Ran-4 (RAN4).